We begin with the raw amino-acid sequence, 513 residues long: Maturase K (513 aa).

The protein belongs to the intron maturase 2 family. MatK subfamily.

It is found in the plastid. It localises to the chloroplast. Functionally, usually encoded in the trnK tRNA gene intron. Probably assists in splicing its own and other chloroplast group II introns. The protein is Maturase K of Byblis liniflora (Carnivorous plant).